The following is an 892-amino-acid chain: Alanine--tRNA ligase (892 aa).

Residues His-574, His-578, Cys-676, and His-680 each coordinate Zn(2+).

This sequence belongs to the class-II aminoacyl-tRNA synthetase family. Zn(2+) is required as a cofactor.

The protein localises to the cytoplasm. It catalyses the reaction tRNA(Ala) + L-alanine + ATP = L-alanyl-tRNA(Ala) + AMP + diphosphate. Functionally, catalyzes the attachment of alanine to tRNA(Ala) in a two-step reaction: alanine is first activated by ATP to form Ala-AMP and then transferred to the acceptor end of tRNA(Ala). Also edits incorrectly charged Ser-tRNA(Ala) and Gly-tRNA(Ala) via its editing domain. This chain is Alanine--tRNA ligase, found in Prochlorococcus marinus (strain MIT 9303).